Reading from the N-terminus, the 1457-residue chain is NBPF family member NBPF12 (1457 aa).

Positions Arg75–Ala119 form a coiled coil. Residues Leu162–Pro200 form a disordered region. The segment covering Glu165–Lys181 has biased composition (acidic residues). An Olduvai 1 domain is found at Glu165 to Pro259. Residues Glu190–Pro200 are compositionally biased toward basic and acidic residues. Residues Lys339 to Ala390 adopt a coiled-coil conformation. The interval Lys432 to Glu472 is disordered. A compositionally biased stretch (acidic residues) spans Glu436 to Lys452. An Olduvai 2 domain is found at Glu436–Pro530. The span at Glu461–Glu472 shows a compositional bias: basic and acidic residues. Residues Lys610–Ala661 adopt a coiled-coil conformation. 9 consecutive Olduvai domains span residues Glu707–Pro799, Glu800–Gly871, Arg872–Pro963, Ser966–Asp1021, Arg1022–Lys1114, Lys1115–Pro1207, Ser1210–Asp1265, Arg1266–Lys1358, and Lys1359–Gln1457. Disordered regions lie at residues Ala721–Leu746 and Trp791–Thr838. Acidic residues-rich tracts occupy residues Asn801 to Glu810 and Glu821 to Asp833. Residues Lys1100–Leu1139 are disordered. The segment covering Gly1102 to Arg1120 has biased composition (basic residues). A disordered region spans residues Lys1344–Leu1378. Positions Gly1346 to Arg1364 are enriched in basic residues.

It belongs to the NBPF family. Widely expressed with highest levels in brain, ovary, mammary gland, skin and adipose tissue. Also expressed in testis. Detected in a number of tumors including osteosarcoma, mammary carcinoma and hepatocellular carcinoma.

The protein localises to the cytoplasm. The protein is NBPF family member NBPF12 of Homo sapiens (Human).